Here is a 359-residue protein sequence, read N- to C-terminus: S-adenosylmethionine:tRNA ribosyltransferase-isomerase (359 aa).

Belongs to the QueA family. In terms of assembly, monomer.

The protein resides in the cytoplasm. The catalysed reaction is 7-aminomethyl-7-carbaguanosine(34) in tRNA + S-adenosyl-L-methionine = epoxyqueuosine(34) in tRNA + adenine + L-methionine + 2 H(+). Its pathway is tRNA modification; tRNA-queuosine biosynthesis. In terms of biological role, transfers and isomerizes the ribose moiety from AdoMet to the 7-aminomethyl group of 7-deazaguanine (preQ1-tRNA) to give epoxyqueuosine (oQ-tRNA). The polypeptide is S-adenosylmethionine:tRNA ribosyltransferase-isomerase (Synechococcus elongatus (strain ATCC 33912 / PCC 7942 / FACHB-805) (Anacystis nidulans R2)).